The following is a 325-amino-acid chain: Olfactory receptor 1S2 (325 aa).

At 1–38 (MKTLCSFLQISRNMHQENQTTITEFILLGLSNQAEHQN) the chain is on the extracellular side. Asparagine 18 is a glycosylation site (N-linked (GlcNAc...) asparagine). Residues 39–62 (LLFVLFLSMYVVTVVGNGLIIVAI) traverse the membrane as a helical segment. Over 63–70 (SLDIYLHT) the chain is Cytoplasmic. The helical transmembrane segment at 71-92 (PMYLFLAYLSFADISSISNSVP) threads the bilayer. The Extracellular portion of the chain corresponds to 93-113 (KMLVNIQTNSQSISYESCITQ). A disulfide bridge connects residues cysteine 110 and cysteine 202. The helical transmembrane segment at 114-133 (MYFSIVFVVTDNLLLGTMAF) threads the bilayer. Residues 134–152 (DHFVAICHPLNYTTFMRAR) lie on the Cytoplasmic side of the membrane. A helical membrane pass occupies residues 153–171 (FGTLLTVISWFLSNIIALT). Residues 172-208 (HTLLLIQLLFCDHNTLPHFFCDLAPLLKLSCSDTMIN) are Extracellular-facing. Residues 209–232 (ELVLFIVGLSVIIFPFVLIFFSYV) traverse the membrane as a helical segment. Topologically, residues 233–249 (CIIRAVLGVSSTQGKWK) are cytoplasmic. A helical transmembrane segment spans residues 250-272 (AFSTCGSHLTIALLFYGTTVGVY). Residues 273 to 285 (FFPSSTHPEDTDK) are Extracellular-facing. Residues 286–305 (IGAVLFTVVTPMMNPFIYSL) traverse the membrane as a helical segment. The Cytoplasmic segment spans residues 306 to 325 (RNKDMKGALRKLINRKISSL).

It belongs to the G-protein coupled receptor 1 family.

The protein localises to the cell membrane. Functionally, odorant receptor. The polypeptide is Olfactory receptor 1S2 (OR1S2) (Homo sapiens (Human)).